Here is a 120-residue protein sequence, read N- to C-terminus: U13-lycotoxin-Ls1c (120 aa).

An N-terminal signal peptide occupies residues 1–16 (MKILFVLISILYAVYC). Residues 17 to 54 (FSSEEDVDSAYLANELEPVEDINSEQYAALEPKEEQER) constitute a propeptide that is removed on maturation. 3 disulfide bridges follow: C56–C70, C69–C87, and C78–C85. An Agouti domain is found at 56 to 95 (CADMGQDRKDDCDCCLNIATCNCWFGRYFCSCTFGDYQTC).

The protein belongs to the neurotoxin 05 (agouti) family. Post-translationally, contains 5 disulfide bonds. As to expression, expressed by the venom gland.

The protein resides in the secreted. This Lycosa singoriensis (Wolf spider) protein is U13-lycotoxin-Ls1c.